The primary structure comprises 465 residues: Ribulose bisphosphate carboxylase large chain (465 aa).

N6,N6,N6-trimethyllysine is present on Lys-4. Substrate is bound by residues Asn-113 and Thr-163. The active-site Proton acceptor is Lys-165. Lys-167 is a binding site for substrate. The Mg(2+) site is built by Lys-191, Asp-193, and Glu-194. At Lys-191 the chain carries N6-carboxylysine. His-284 (proton acceptor) is an active-site residue. Substrate is bound by residues Arg-285, His-317, and Ser-369.

The protein belongs to the RuBisCO large chain family. Type I subfamily. Heterohexadecamer of 8 large chains and 8 small chains; disulfide-linked. The disulfide link is formed within the large subunit homodimers. Mg(2+) is required as a cofactor. In terms of processing, the disulfide bond which can form in the large chain dimeric partners within the hexadecamer appears to be associated with oxidative stress and protein turnover.

The protein resides in the plastid. It localises to the chloroplast. It catalyses the reaction 2 (2R)-3-phosphoglycerate + 2 H(+) = D-ribulose 1,5-bisphosphate + CO2 + H2O. It carries out the reaction D-ribulose 1,5-bisphosphate + O2 = 2-phosphoglycolate + (2R)-3-phosphoglycerate + 2 H(+). Its function is as follows. RuBisCO catalyzes two reactions: the carboxylation of D-ribulose 1,5-bisphosphate, the primary event in carbon dioxide fixation, as well as the oxidative fragmentation of the pentose substrate in the photorespiration process. Both reactions occur simultaneously and in competition at the same active site. In Cornus oblonga, this protein is Ribulose bisphosphate carboxylase large chain.